A 396-amino-acid polypeptide reads, in one-letter code: Phosphoglycerate kinase (396 aa).

Residues 21–23 (DFN), Arg36, 59–62 (HLGR), Arg118, and Arg151 contribute to the substrate site. Residues Lys201, Gly292, Glu323, and 349–352 (GGDS) contribute to the ATP site.

Belongs to the phosphoglycerate kinase family. In terms of assembly, monomer.

Its subcellular location is the cytoplasm. The enzyme catalyses (2R)-3-phosphoglycerate + ATP = (2R)-3-phospho-glyceroyl phosphate + ADP. Its pathway is carbohydrate degradation; glycolysis; pyruvate from D-glyceraldehyde 3-phosphate: step 2/5. This Leptospira interrogans serogroup Icterohaemorrhagiae serovar copenhageni (strain Fiocruz L1-130) protein is Phosphoglycerate kinase.